The chain runs to 370 residues: Putrescine-binding periplasmic protein PotF (370 aa).

An N-terminal signal peptide occupies residues 1–26 (MTALNKKWLSGLVAGALMAVSVGTLA). Ser-38 is a binding site for putrescine. Cys-175 and Cys-239 are joined by a disulfide. Asp-247 and Asp-278 together coordinate putrescine.

This sequence belongs to the bacterial solute-binding protein PotD/PotF family. In terms of assembly, the complex is composed of two ATP-binding proteins (PotG), two transmembrane proteins (PotH and PotI) and a solute-binding protein (PotF).

It is found in the periplasm. Transport is feedback inhibited by intracellular polyamines. Functionally, part of the ABC transporter complex PotFGHI involved in putrescine uptake. Binds putrescine. Imports putrescine for maintenance of the optimal concentration of polyamines necessary for cell growth in the presence of glucose. The sequence is that of Putrescine-binding periplasmic protein PotF from Escherichia coli (strain K12).